The sequence spans 510 residues: MTTSIIERIDAWAEKTPDFPCYEYAGTRLSYKELKRQSDAFGSFLLNNLNTDKEKPIIVYGHMSPLMLIAFLGSIKSGRAYVPVDVSMPVERIEQIKKAADPSMFICTEELPSNLTITGCPVLSQEQLMDALEKHFDEVPDKAECVKNDDNYYIIYTSGSTGNPKGVQISQNNLVSFSNWILQDFSLRQGLRFLNQAPFSFDLSVMDLYPSLLSGGTLVPLDKTITANMKDLYREIPAQNFDVWVSTPSFADLCLLDENFNQENNPSLTRFLFCGEVLAKKTATELLDRFPDAVIYNTYGPTEATVAVTQVKVTRELIEAYPSLPLGVIKPDMRLHIVDQETGEILPEGEKGEIILIGASVSKGYLNEPEKTDQVFFDYKGYQAYHTGDSGIIKDGYLFFQGRLDFQIKLHGYRIELEDIENNLKKVSYIQNCAIIPKMKDEKVDMLVAQVIPTNHDFEKEYQLSAAIKNELKEFMPAYMIPRKWIYKTEFPLTMNGKIDRKALNSEVNK.

157–158 (TS) provides a ligand contact to ATP. D202 serves as a coordination point for D-alanine. An ATP-binding site is contributed by 297 to 302 (NTYGPT). V306 provides a ligand contact to D-alanine. ATP-binding residues include D389 and K498. K498 is a binding site for D-alanine.

It belongs to the ATP-dependent AMP-binding enzyme family. DltA subfamily.

The protein localises to the cytoplasm. It catalyses the reaction holo-[D-alanyl-carrier protein] + D-alanine + ATP = D-alanyl-[D-alanyl-carrier protein] + AMP + diphosphate. It functions in the pathway cell wall biogenesis; lipoteichoic acid biosynthesis. In terms of biological role, catalyzes the first step in the D-alanylation of lipoteichoic acid (LTA), the activation of D-alanine and its transfer onto the D-alanyl carrier protein (Dcp) DltC. In an ATP-dependent two-step reaction, forms a high energy D-alanyl-AMP intermediate, followed by transfer of the D-alanyl residue as a thiol ester to the phosphopantheinyl prosthetic group of the Dcp. D-alanylation of LTA plays an important role in modulating the properties of the cell wall in Gram-positive bacteria, influencing the net charge of the cell wall. This chain is D-alanine--D-alanyl carrier protein ligase, found in Listeria monocytogenes serotype 4a (strain HCC23).